Reading from the N-terminus, the 114-residue chain is Putative antiporter subunit mnhC2 (114 aa).

3 helical membrane passes run 3 to 23, 25 to 45, and 72 to 92; these read LILL…ILSI, LIRI…IIMS, and AIVL…LVLI.

Belongs to the CPA3 antiporters (TC 2.A.63) subunit C family. May form a heterooligomeric complex that consists of seven subunits: mnhA2, mnhB2, mnhC2, mnhD2, mnhE2, mnhF2 and mnhG2.

It localises to the cell membrane. The protein is Putative antiporter subunit mnhC2 (mnhC2) of Staphylococcus epidermidis (strain ATCC 12228 / FDA PCI 1200).